The following is a 239-amino-acid chain: ATP-dependent dethiobiotin synthetase BioD (239 aa).

15–20 (EIGKTF) contributes to the ATP binding site. Position 19 (Thr19) interacts with Mg(2+). Lys40 is an active-site residue. Residues Asp57, 118-121 (EGVG), 178-179 (NH), and 211-213 (AHL) contribute to the ATP site. Asp57 and Glu118 together coordinate Mg(2+).

The protein belongs to the dethiobiotin synthetase family. In terms of assembly, homodimer. It depends on Mg(2+) as a cofactor.

The protein resides in the cytoplasm. The catalysed reaction is (7R,8S)-7,8-diammoniononanoate + CO2 + ATP = (4R,5S)-dethiobiotin + ADP + phosphate + 3 H(+). The protein operates within cofactor biosynthesis; biotin biosynthesis; biotin from 7,8-diaminononanoate: step 1/2. Functionally, catalyzes a mechanistically unusual reaction, the ATP-dependent insertion of CO2 between the N7 and N8 nitrogen atoms of 7,8-diaminopelargonic acid (DAPA, also called 7,8-diammoniononanoate) to form a ureido ring. In Burkholderia vietnamiensis (strain G4 / LMG 22486) (Burkholderia cepacia (strain R1808)), this protein is ATP-dependent dethiobiotin synthetase BioD.